The sequence spans 557 residues: Hydroxylamine reductase (557 aa).

Residues C3, C6, C19, and C26 each coordinate [4Fe-4S] cluster. 8 residues coordinate hybrid [4Fe-2O-2S] cluster: H253, E277, C321, C408, C436, C461, E495, and K497. Residue C408 is modified to Cysteine persulfide.

The protein belongs to the HCP family. [4Fe-4S] cluster serves as cofactor. It depends on hybrid [4Fe-2O-2S] cluster as a cofactor.

It is found in the cytoplasm. It catalyses the reaction A + NH4(+) + H2O = hydroxylamine + AH2 + H(+). In terms of biological role, catalyzes the reduction of hydroxylamine to form NH(3) and H(2)O. The sequence is that of Hydroxylamine reductase from Acidiphilium cryptum (strain JF-5).